We begin with the raw amino-acid sequence, 244 residues long: U11/U12 small nuclear ribonucleoprotein 35 kDa protein (244 aa).

Positions Leu-51–Glu-129 constitute an RRM domain. The segment covering Gly-146–Phe-162 has biased composition (basic and acidic residues). The disordered stretch occupies residues Gly-146–Lys-244. A Glycyl lysine isopeptide (Lys-Gly) (interchain with G-Cter in SUMO2) cross-link involves residue Lys-172. 2 stretches are compositionally biased toward basic and acidic residues: residues Asn-173 to Glu-185 and Arg-192 to Lys-244.

In terms of assembly, component of the U11/U12 snRNPs that are part of the U12-type spliceosome.

It localises to the nucleus. The polypeptide is U11/U12 small nuclear ribonucleoprotein 35 kDa protein (Snrnp35) (Rattus norvegicus (Rat)).